Consider the following 295-residue polypeptide: MSRILTHVPGRTVNRSYALPALVGSAAGRLSGNHSHGREAYIALPQWACSRQPSTPPLQTPGRINALWSLRPVLPMPGRGCQLLRLGGRWLSVVCCRNGSMNLVVWAEGNGVARVIAYRWLRVGRLPVPARRVGRVILVDEPAGQPGRWGRTAVCARLSSADQKVDLDRQVVGVTAWATAEQIPVGKVVTEVGSALYGRRRTFLTLLGDPTVRRIVMKRRDRLGRFGFECVQAVLAADGRELVVVDSADVDDDVVGDITEILTSICARLYGKRAAGNRAARAVAAAARAGGHEAR.

The region spanning 151–290 (RTAVCARLSS…RAVAAAARAG (140 aa)) is the Resolvase/invertase-type recombinase catalytic domain. S159 acts as the O-(5'-phospho-DNA)-serine intermediate in catalysis.

This is an uncharacterized protein from Mycobacterium bovis (strain ATCC BAA-935 / AF2122/97).